The sequence spans 90 residues: Putative cytochrome c oxidase subunit 5b-like (90 aa).

Cys43, Cys67, and Cys70 together coordinate Zn(2+).

The protein belongs to the cytochrome c oxidase subunit 5B (TC 3.D.4.11) family.

This is Putative cytochrome c oxidase subunit 5b-like from Arabidopsis thaliana (Mouse-ear cress).